The primary structure comprises 515 residues: ATP synthase subunit alpha (515 aa).

Position 169–176 (169–176) interacts with ATP; it reads GDRQTGKT.

This sequence belongs to the ATPase alpha/beta chains family. In terms of assembly, F-type ATPases have 2 components, CF(1) - the catalytic core - and CF(0) - the membrane proton channel. CF(1) has five subunits: alpha(3), beta(3), gamma(1), delta(1), epsilon(1). CF(0) has three main subunits: a(1), b(2) and c(9-12). The alpha and beta chains form an alternating ring which encloses part of the gamma chain. CF(1) is attached to CF(0) by a central stalk formed by the gamma and epsilon chains, while a peripheral stalk is formed by the delta and b chains.

It is found in the cell inner membrane. The enzyme catalyses ATP + H2O + 4 H(+)(in) = ADP + phosphate + 5 H(+)(out). Functionally, produces ATP from ADP in the presence of a proton gradient across the membrane. The alpha chain is a regulatory subunit. The sequence is that of ATP synthase subunit alpha from Neisseria meningitidis serogroup C / serotype 2a (strain ATCC 700532 / DSM 15464 / FAM18).